The primary structure comprises 731 residues: Wall-associated receptor kinase-like 5 (731 aa).

The N-terminal stretch at 1–26 (MKTKTYRFVCLVASVLTLQLMNGSSA) is a signal peptide. Over 27–360 (ATPPPPPNSK…PAKPLVLQGV (334 aa)) the chain is Extracellular. Residues N37, N43, N73, N96, N124, N137, N236, and N272 are each glycosylated (N-linked (GlcNAc...) asparagine). Residues 285–342 (CLCEYGYFSEMSYRNCYCSLGFTGNPYLRGGCIDNDDCKGPNICEEGTCVNVPGGYRC) form an atypical EGF-like region. Intrachain disulfides connect C287–C300, C322–C333, and C328–C342. A helical transmembrane segment spans residues 361 to 381 (LLGLMGLLFLVVGTLGLIIFI). At 382-731 (KKRRRIISSR…EDQVMEISRE (350 aa)) the chain is on the cytoplasmic side. A Protein kinase domain is found at 432–705 (FSVKRVLGKG…REASLELERI (274 aa)). ATP-binding positions include 438–446 (LGKGSQGTV) and K460. The residue at position 505 (Y505) is a Phosphotyrosine. The active-site Proton acceptor is the D557. A phosphothreonine mark is found at T591 and T596. The residue at position 604 (Y604) is a Phosphotyrosine. Positions 709–731 (PEDLEAHIENDDEEDQVMEISRE) are disordered.

This sequence belongs to the protein kinase superfamily. Ser/Thr protein kinase family. As to expression, preferentially expressed in roots and flowers.

The protein resides in the membrane. The catalysed reaction is L-seryl-[protein] + ATP = O-phospho-L-seryl-[protein] + ADP + H(+). The enzyme catalyses L-threonyl-[protein] + ATP = O-phospho-L-threonyl-[protein] + ADP + H(+). Serine/threonine-protein kinase that may function as a signaling receptor of extracellular matrix component. May be involved in plant's response to pathogen infection. The sequence is that of Wall-associated receptor kinase-like 5 (WAKL5) from Arabidopsis thaliana (Mouse-ear cress).